The sequence spans 902 residues: Proline-rich transmembrane protein 4 (902 aa).

Residues 1–18 form the signal peptide; that stretch reads MAGRSCLELGLFCWVLLA. Disordered regions lie at residues 72–92, 121–149, and 281–333; these read TETH…EEGD, TPWA…SQPR, and SPSS…LLDD. Polar residues-rich tracts occupy residues 122–136 and 281–302; these read PWAS…SRLS and SPSS…STSG. 5 helical membrane-spanning segments follow: residues 371–391, 393–413, 432–452, 468–488, and 501–521; these read AGAL…LLPW, CPPG…AGTT, LVWL…LGLA, LAAL…GSAV, and GLHA…SCWG. The residue at position 642 (Ser-642) is a Phosphoserine. 3 disordered regions span residues 701-723, 774-811, and 839-872; these read AGAN…DFRP, AGPS…SLCG, and PPRP…ASEL. The segment covering 704–717 has biased composition (polar residues); that stretch reads NPTQSTASSPSSDC. A compositionally biased stretch (pro residues) spans 786–798; it reads SPAPPELPSPGAW. Low complexity-rich tracts occupy residues 799 to 811 and 843 to 854; these read PPGS…SLCG and SESSPSLPASGS.

It is found in the membrane. This chain is Proline-rich transmembrane protein 4 (Prrt4), found in Mus musculus (Mouse).